We begin with the raw amino-acid sequence, 185 residues long: Elongation factor P (185 aa).

It belongs to the elongation factor P family.

It is found in the cytoplasm. The protein operates within protein biosynthesis; polypeptide chain elongation. In terms of biological role, involved in peptide bond synthesis. Stimulates efficient translation and peptide-bond synthesis on native or reconstituted 70S ribosomes in vitro. Probably functions indirectly by altering the affinity of the ribosome for aminoacyl-tRNA, thus increasing their reactivity as acceptors for peptidyl transferase. The sequence is that of Elongation factor P from Burkholderia cenocepacia (strain HI2424).